Consider the following 364-residue polypeptide: Methylthioribose-1-phosphate isomerase (364 aa).

Substrate is bound by residues 53–55 (RGA), Arg90, and Gln203. Residue Asp244 is the Proton donor of the active site. 254 to 255 (NK) lines the substrate pocket.

The protein belongs to the eIF-2B alpha/beta/delta subunits family. MtnA subfamily.

It carries out the reaction 5-(methylsulfanyl)-alpha-D-ribose 1-phosphate = 5-(methylsulfanyl)-D-ribulose 1-phosphate. Its pathway is amino-acid biosynthesis; L-methionine biosynthesis via salvage pathway; L-methionine from S-methyl-5-thio-alpha-D-ribose 1-phosphate: step 1/6. Catalyzes the interconversion of methylthioribose-1-phosphate (MTR-1-P) into methylthioribulose-1-phosphate (MTRu-1-P). The polypeptide is Methylthioribose-1-phosphate isomerase (Brucella anthropi (strain ATCC 49188 / DSM 6882 / CCUG 24695 / JCM 21032 / LMG 3331 / NBRC 15819 / NCTC 12168 / Alc 37) (Ochrobactrum anthropi)).